Reading from the N-terminus, the 196-residue chain is N-(5'-phosphoribosyl)anthranilate isomerase (196 aa).

Belongs to the TrpF family.

The catalysed reaction is N-(5-phospho-beta-D-ribosyl)anthranilate = 1-(2-carboxyphenylamino)-1-deoxy-D-ribulose 5-phosphate. The protein operates within amino-acid biosynthesis; L-tryptophan biosynthesis; L-tryptophan from chorismate: step 3/5. This chain is N-(5'-phosphoribosyl)anthranilate isomerase, found in Nitratiruptor sp. (strain SB155-2).